The sequence spans 136 residues: Large ribosomal subunit protein uL22 (136 aa).

This sequence belongs to the universal ribosomal protein uL22 family. As to quaternary structure, part of the 50S ribosomal subunit.

Its function is as follows. This protein binds specifically to 23S rRNA; its binding is stimulated by other ribosomal proteins, e.g. L4, L17, and L20. It is important during the early stages of 50S assembly. It makes multiple contacts with different domains of the 23S rRNA in the assembled 50S subunit and ribosome. In terms of biological role, the globular domain of the protein is located near the polypeptide exit tunnel on the outside of the subunit, while an extended beta-hairpin is found that lines the wall of the exit tunnel in the center of the 70S ribosome. This is Large ribosomal subunit protein uL22 from Bacteroides thetaiotaomicron (strain ATCC 29148 / DSM 2079 / JCM 5827 / CCUG 10774 / NCTC 10582 / VPI-5482 / E50).